Consider the following 264-residue polypeptide: 3-methyl-2-oxobutanoate hydroxymethyltransferase (264 aa).

The Mg(2+) site is built by D45 and D84. 3-methyl-2-oxobutanoate is bound by residues 45-46 (DS), D84, and K112. Mg(2+) is bound at residue E114. The Proton acceptor role is filled by E181.

This sequence belongs to the PanB family. In terms of assembly, homodecamer; pentamer of dimers. Mg(2+) is required as a cofactor.

Its subcellular location is the cytoplasm. The enzyme catalyses 3-methyl-2-oxobutanoate + (6R)-5,10-methylene-5,6,7,8-tetrahydrofolate + H2O = 2-dehydropantoate + (6S)-5,6,7,8-tetrahydrofolate. Its pathway is cofactor biosynthesis; (R)-pantothenate biosynthesis; (R)-pantoate from 3-methyl-2-oxobutanoate: step 1/2. Functionally, catalyzes the reversible reaction in which hydroxymethyl group from 5,10-methylenetetrahydrofolate is transferred onto alpha-ketoisovalerate to form ketopantoate. In Shigella flexneri serotype 5b (strain 8401), this protein is 3-methyl-2-oxobutanoate hydroxymethyltransferase.